The sequence spans 141 residues: HTH-type transcriptional repressor NsrR (141 aa).

The 128-residue stretch at 2–129 (QLTSFTDYGL…DSHTLADMVE (128 aa)) folds into the HTH rrf2-type domain. Residues 28–51 (ISEVTEVYGVSRNHMVKIINQLSR) constitute a DNA-binding region (H-T-H motif). 3 residues coordinate [2Fe-2S] cluster: cysteine 91, cysteine 96, and cysteine 102.

[2Fe-2S] cluster is required as a cofactor.

Functionally, nitric oxide-sensitive repressor of genes involved in protecting the cell against nitrosative stress. May require iron for activity. This Serratia proteamaculans (strain 568) protein is HTH-type transcriptional repressor NsrR.